We begin with the raw amino-acid sequence, 431 residues long: Divergent protein kinase domain 1B (431 aa).

Over 1-30 (MRRLRRLVHLVLLCPFSKGLQGRLPGLRVK) the chain is Cytoplasmic. A May mediate ER retention motif is present at residues 5-6 (RR). A helical transmembrane segment spans residues 31–51 (YVLLVWLGIFVGSWMVYVHYS). The Lumenal portion of the chain corresponds to 52–431 (SYSELCRGHV…WREISNTNYS (380 aa)). 2 cysteine pairs are disulfide-bonded: C57-C94 and C62-C117.

This sequence belongs to the DIPK family. In terms of processing, among the many cysteines in the lumenal domain, most are probably involved in disulfide bonds.

It is found in the endoplasmic reticulum membrane. The polypeptide is Divergent protein kinase domain 1B (Rattus norvegicus (Rat)).